Consider the following 381-residue polypeptide: Protein-glutamate methylesterase/protein-glutamine glutaminase (381 aa).

Residues 8–125 (QVLCIDDSAL…RDGMNEYADQ (118 aa)) form the Response regulatory domain. Residue Asp59 is modified to 4-aspartylphosphate. The region spanning 183–375 (FSSTEKLIIV…PHVLARLSAH (193 aa)) is the CheB-type methylesterase domain. Catalysis depends on residues Ser195, His221, and Asp317.

The protein belongs to the CheB family. In terms of processing, phosphorylated by CheA. Phosphorylation of the N-terminal regulatory domain activates the methylesterase activity.

It localises to the cytoplasm. The enzyme catalyses [protein]-L-glutamate 5-O-methyl ester + H2O = L-glutamyl-[protein] + methanol + H(+). The catalysed reaction is L-glutaminyl-[protein] + H2O = L-glutamyl-[protein] + NH4(+). In terms of biological role, involved in chemotaxis. Part of a chemotaxis signal transduction system that modulates chemotaxis in response to various stimuli. Catalyzes the demethylation of specific methylglutamate residues introduced into the chemoreceptors (methyl-accepting chemotaxis proteins or MCP) by CheR. Also mediates the irreversible deamidation of specific glutamine residues to glutamic acid. In Ralstonia nicotianae (strain ATCC BAA-1114 / GMI1000) (Ralstonia solanacearum), this protein is Protein-glutamate methylesterase/protein-glutamine glutaminase.